The chain runs to 218 residues: Protein-L-isoaspartate O-methyltransferase (218 aa).

The active site involves Ser60.

It belongs to the methyltransferase superfamily. L-isoaspartyl/D-aspartyl protein methyltransferase family.

The protein resides in the cytoplasm. It catalyses the reaction [protein]-L-isoaspartate + S-adenosyl-L-methionine = [protein]-L-isoaspartate alpha-methyl ester + S-adenosyl-L-homocysteine. Catalyzes the methyl esterification of L-isoaspartyl residues in peptides and proteins that result from spontaneous decomposition of normal L-aspartyl and L-asparaginyl residues. It plays a role in the repair and/or degradation of damaged proteins. The sequence is that of Protein-L-isoaspartate O-methyltransferase from Roseiflexus castenholzii (strain DSM 13941 / HLO8).